The following is a 270-amino-acid chain: MPELPEVETTRRGIAPHLEGQRVSRVVVRDRRLRWPIPEDLDVRLSGQRIVSVERRAKYLLINAEVGTLISHLGMSGNLRLVELGLPAAKHEHVDIELESGLMLRYTDPRRFGAMLWSLDPLNHELLLRLGPEPLTDLFDGERLFQLSRGRSMAVKPFIMDNAVVVGVGNIYATEALFAAGIDPRREAGGISRARYLKLAIEIKRVLAAAIEQGGTTLRDFIGGDGQPGYFQQELFVYGRGGQPCKVCGTELREVKLGQRASVYCPRCQR.

Proline 2 acts as the Schiff-base intermediate with DNA in catalysis. The active-site Proton donor is glutamate 3. Residue lysine 58 is the Proton donor; for beta-elimination activity of the active site. Residues histidine 91, arginine 110, and arginine 151 each contribute to the DNA site. The segment at 236-270 adopts an FPG-type zinc-finger fold; sequence FVYGRGGQPCKVCGTELREVKLGQRASVYCPRCQR. The active-site Proton donor; for delta-elimination activity is the arginine 260.

The protein belongs to the FPG family. In terms of assembly, monomer. Zn(2+) serves as cofactor.

The enzyme catalyses Hydrolysis of DNA containing ring-opened 7-methylguanine residues, releasing 2,6-diamino-4-hydroxy-5-(N-methyl)formamidopyrimidine.. The catalysed reaction is 2'-deoxyribonucleotide-(2'-deoxyribose 5'-phosphate)-2'-deoxyribonucleotide-DNA = a 3'-end 2'-deoxyribonucleotide-(2,3-dehydro-2,3-deoxyribose 5'-phosphate)-DNA + a 5'-end 5'-phospho-2'-deoxyribonucleoside-DNA + H(+). In terms of biological role, involved in base excision repair of DNA damaged by oxidation or by mutagenic agents. Acts as a DNA glycosylase that recognizes and removes damaged bases. Has a preference for oxidized purines, such as 7,8-dihydro-8-oxoguanine (8-oxoG). Has AP (apurinic/apyrimidinic) lyase activity and introduces nicks in the DNA strand. Cleaves the DNA backbone by beta-delta elimination to generate a single-strand break at the site of the removed base with both 3'- and 5'-phosphates. This Pseudomonas putida (strain ATCC 700007 / DSM 6899 / JCM 31910 / BCRC 17059 / LMG 24140 / F1) protein is Formamidopyrimidine-DNA glycosylase.